Reading from the N-terminus, the 1024-residue chain is SWI/SNF-related matrix-associated actin-dependent regulator of chromatin subfamily A containing DEAD/H box 1 (1024 aa).

Met1 carries the post-translational modification N-acetylmethionine. Positions 1–83 are disordered; the sequence is MNLFNLDRFR…NESKASLSCF (83 aa). Basic and acidic residues predominate over residues 7–19; sequence DRFRFEKRSKIEE. At Thr54 the chain carries Phosphothreonine. Ser57 is modified (phosphoserine). A Glycyl lysine isopeptide (Lys-Gly) (interchain with G-Cter in SUMO2) cross-link involves residue Lys77. Ser79, Ser124, Ser127, Ser132, Ser145, and Ser151 each carry phosphoserine. One can recognise a CUE 1 domain in the interval 156 to 198; sequence LKDAKLQTLKELFPQRSDSDLLKLIDSTSTMDGAIAAALLKFG. The disordered stretch occupies residues 201 to 250; sequence GGGPRKRKLSSSSEAYEEDEANDDQSLKKPRGDRREESNESAEASSNWEK. Ser210 and Ser213 each carry phosphoserine. Tyr216 is subject to Phosphotyrosine. Phosphoserine occurs at positions 238 and 241. Residues 250–293 form the CUE 2 domain; sequence KQESIVLKLQKEFPNFDKQELREVLKEHEWMYTEALESLKVFAE. Ser301 carries the phosphoserine modification. The disordered stretch occupies residues 331–369; that stretch reads SMKPQNGFNKKRKKNVFNPKKAVEDSEYDSGSDAGSSLD. Glycyl lysine isopeptide (Lys-Gly) (interchain with G-Cter in SUMO2) cross-links involve residues Lys333 and Lys469. The Helicase ATP-binding domain occupies 507–675; that stretch reads ALVHKHGLNG…MSLLNFVMPH (169 aa). Position 519–527 (519–527) interacts with ATP; the sequence is ADEMGLGKT. A DEGH box motif is present at residues 626-629; that stretch reads DEGH. Residues 719–736 carry the Nuclear localization signal motif; it reads RRVKEEVLKLLPPKKDQI. Lys722 participates in a covalent cross-link: Glycyl lysine isopeptide (Lys-Gly) (interchain with G-Cter in SUMO2). The 153-residue stretch at 856 to 1008 folds into the Helicase C-terminal domain; it reads TLGCILSELK…MTTVDEADEG (153 aa). ATP is bound at residue 895-902; it reads YLRLDGKT. Lys994 is covalently cross-linked (Glycyl lysine isopeptide (Lys-Gly) (interchain with G-Cter in SUMO2)). Residues 1003 to 1006 carry the DEAD box motif; the sequence is DEAD.

The protein belongs to the SNF2/RAD54 helicase family. In terms of assembly, binds to DNA preferentially in the vicinity of transcriptional start sites. Interacts with MSH2 and TRIM28. Part of a complex composed of TRIM28, HDAC1, HDAC2 and EHMT2. Interacts with PCNA.

Its subcellular location is the nucleus. The protein resides in the chromosome. It catalyses the reaction ATP + H2O = ADP + phosphate + H(+). Its function is as follows. DNA helicase that possesses intrinsic ATP-dependent nucleosome-remodeling activity and is both required for DNA repair and heterochromatin organization. Promotes DNA end resection of double-strand breaks (DSBs) following DNA damage: probably acts by weakening histone DNA interactions in nucleosomes flanking DSBs. Required for the restoration of heterochromatin organization after replication. Acts at replication sites to facilitate the maintenance of heterochromatin by directing H3 and H4 histones deacetylation, H3 'Lys-9' trimethylation (H3K9me3) and restoration of silencing. The sequence is that of SWI/SNF-related matrix-associated actin-dependent regulator of chromatin subfamily A containing DEAD/H box 1 (Smarcad1) from Rattus norvegicus (Rat).